We begin with the raw amino-acid sequence, 98 residues long: Co-chaperonin GroES (98 aa).

Residues 35–57 (EKPQEGKVISAGPGRVDDKGTRV) form a disordered region.

It belongs to the GroES chaperonin family. As to quaternary structure, heptamer of 7 subunits arranged in a ring. Interacts with the chaperonin GroEL.

It localises to the cytoplasm. Together with the chaperonin GroEL, plays an essential role in assisting protein folding. The GroEL-GroES system forms a nano-cage that allows encapsulation of the non-native substrate proteins and provides a physical environment optimized to promote and accelerate protein folding. GroES binds to the apical surface of the GroEL ring, thereby capping the opening of the GroEL channel. The protein is Co-chaperonin GroES of Cutibacterium acnes (strain DSM 16379 / KPA171202) (Propionibacterium acnes).